A 221-amino-acid chain; its full sequence is ATP phosphoribosyltransferase (221 aa).

This sequence belongs to the ATP phosphoribosyltransferase family. Short subfamily. As to quaternary structure, heteromultimer composed of HisG and HisZ subunits.

The protein resides in the cytoplasm. It carries out the reaction 1-(5-phospho-beta-D-ribosyl)-ATP + diphosphate = 5-phospho-alpha-D-ribose 1-diphosphate + ATP. Its pathway is amino-acid biosynthesis; L-histidine biosynthesis; L-histidine from 5-phospho-alpha-D-ribose 1-diphosphate: step 1/9. Catalyzes the condensation of ATP and 5-phosphoribose 1-diphosphate to form N'-(5'-phosphoribosyl)-ATP (PR-ATP). Has a crucial role in the pathway because the rate of histidine biosynthesis seems to be controlled primarily by regulation of HisG enzymatic activity. In Anaeromyxobacter dehalogenans (strain 2CP-C), this protein is ATP phosphoribosyltransferase.